Reading from the N-terminus, the 478-residue chain is Cytochrome c lysine N-methyltransferase 1 (478 aa).

In terms of domain architecture, SET spans 32–284 (PCVSIERSQI…DRFEVFISYC (253 aa)). Residues 199–299 (TRAVVLRVYA…VHFKHTYGFF (101 aa)) are SET-like.

The protein belongs to the class V-like SAM-binding methyltransferase superfamily.

It localises to the cytoplasm. The protein resides in the cytosol. The enzyme catalyses L-lysyl-[cytochrome c] + S-adenosyl-L-methionine = N(6)-methyl-L-lysyl-[cytochrome c] + S-adenosyl-L-homocysteine + H(+). Functionally, methyltransferase which mediates trimethylation of cytochrome c (CYC1). The sequence is that of Cytochrome c lysine N-methyltransferase 1 (CTM1) from Eremothecium gossypii (strain ATCC 10895 / CBS 109.51 / FGSC 9923 / NRRL Y-1056) (Yeast).